A 577-amino-acid chain; its full sequence is Proline--tRNA ligase (577 aa).

It belongs to the class-II aminoacyl-tRNA synthetase family. ProS type 1 subfamily. In terms of assembly, homodimer.

It is found in the cytoplasm. It catalyses the reaction tRNA(Pro) + L-proline + ATP = L-prolyl-tRNA(Pro) + AMP + diphosphate. Functionally, catalyzes the attachment of proline to tRNA(Pro) in a two-step reaction: proline is first activated by ATP to form Pro-AMP and then transferred to the acceptor end of tRNA(Pro). As ProRS can inadvertently accommodate and process non-cognate amino acids such as alanine and cysteine, to avoid such errors it has two additional distinct editing activities against alanine. One activity is designated as 'pretransfer' editing and involves the tRNA(Pro)-independent hydrolysis of activated Ala-AMP. The other activity is designated 'posttransfer' editing and involves deacylation of mischarged Ala-tRNA(Pro). The misacylated Cys-tRNA(Pro) is not edited by ProRS. This is Proline--tRNA ligase from Janthinobacterium sp. (strain Marseille) (Minibacterium massiliensis).